A 355-amino-acid chain; its full sequence is MWNKNRLTQMLSIEYPIIQAGMAGSTTPKLVASVSNSGGLGTIGAGYFNTQQLEDEIDYVRQLTSNSFGVNVFVPSQQSYTSSQIENMNAWLKPYRRALHLEEPVVKITEEQQFKCHIDTIIKKQVPVCCFTFGIPSESIIKRLKEANIKLIGTATSVDEAIANEKAGMDAIVAQGSEAGGHRGSFLKPKNQLPMVGTISLVPQIVDVVSIPVIAAGGIMDGRGVLASIVLGAEGVQMGTAFLTSQDSNASELLRDAIINSKETDTVVTKAFSGKLARGINNRFIEEMSQYEGDIPDYPIQNELTSSIRKAAANIGDKELTHMWSGQSPRLATTHPANTIVSNIINQINQIMQYK.

FMN contacts are provided by residues N71, Q175, G180, G218, and 237–240 (QMGT).

This sequence belongs to the nitronate monooxygenase family. NMO class I subfamily. Requires FMN as cofactor.

The enzyme catalyses 3 propionate 3-nitronate + 3 O2 + H2O = 3 3-oxopropanoate + 2 nitrate + nitrite + H2O2 + 3 H(+). Functionally, nitronate monooxygenase that uses molecular oxygen to catalyze the oxidative denitrification of alkyl nitronates. Acts on propionate 3-nitronate (P3N), the presumed physiological substrate. Probably functions in the detoxification of P3N, a metabolic poison produced by plants and fungi as a defense mechanism. In Staphylococcus aureus (strain MSSA476), this protein is Probable nitronate monooxygenase.